We begin with the raw amino-acid sequence, 313 residues long: Proclavaminate amidinohydrolase (313 aa).

Mn(2+)-binding residues include histidine 121, aspartate 144, histidine 146, aspartate 148, aspartate 235, and aspartate 237.

Belongs to the arginase family. In terms of assembly, homohexamer. Requires Mn(2+) as cofactor.

It carries out the reaction amidinoproclavaminate + H2O = proclavaminate + urea. It functions in the pathway antibiotic biosynthesis; clavulanate biosynthesis; clavulanate from D-glyceraldehyde 3-phosphate and L-arginine: step 4/8. The protein is Proclavaminate amidinohydrolase (pah) of Streptomyces clavuligerus.